Reading from the N-terminus, the 371-residue chain is Phosphate acyltransferase (371 aa).

The protein belongs to the PlsX family. As to quaternary structure, homodimer. Probably interacts with PlsY.

It is found in the cytoplasm. The enzyme catalyses a fatty acyl-[ACP] + phosphate = an acyl phosphate + holo-[ACP]. It participates in lipid metabolism; phospholipid metabolism. In terms of biological role, catalyzes the reversible formation of acyl-phosphate (acyl-PO(4)) from acyl-[acyl-carrier-protein] (acyl-ACP). This enzyme utilizes acyl-ACP as fatty acyl donor, but not acyl-CoA. In Ruegeria pomeroyi (strain ATCC 700808 / DSM 15171 / DSS-3) (Silicibacter pomeroyi), this protein is Phosphate acyltransferase.